The following is an 832-amino-acid chain: Protein P (832 aa).

The tract at residues 1 to 177 is terminal protein domain (TP); the sequence is MPLSYQHFRR…FCGSPYSWEQ (177 aa). The spacer stretch occupies residues 178-335; the sequence is DLQHGAESIH…YCLSLIVNLL (158 aa). Disordered regions lie at residues 186-218 and 239-266; these read IHQQ…QSQQ and TARR…SCLY. A polymerase/reverse transcriptase domain (RT) region spans residues 336–679; it reads EDWGPCDEYG…YLNLYPVARQ (344 aa). Residues 346–589 form the Reverse transcriptase domain; the sequence is EHHIRIPRTP…YSLHFMGYVI (244 aa). Positions 418, 540, and 541 each coordinate Mg(2+).

The protein belongs to the hepadnaviridae P protein family.

It catalyses the reaction DNA(n) + a 2'-deoxyribonucleoside 5'-triphosphate = DNA(n+1) + diphosphate. The catalysed reaction is Endonucleolytic cleavage to 5'-phosphomonoester.. With respect to regulation, activated by host HSP70 and HSP40 in vitro to be able to bind the epsilon loop of the pgRNA. Because deletion of the RNase H region renders the protein partly chaperone-independent, the chaperones may be needed indirectly to relieve occlusion of the RNA-binding site by this domain. Inhibited by several reverse-transcriptase inhibitors: Lamivudine, Adefovir and Entecavir. Its function is as follows. Multifunctional enzyme that converts the viral RNA genome into dsDNA in viral cytoplasmic capsids. This enzyme displays a DNA polymerase activity that can copy either DNA or RNA templates, and a ribonuclease H (RNase H) activity that cleaves the RNA strand of RNA-DNA heteroduplexes in a partially processive 3'- to 5'-endonucleasic mode. Neo-synthesized pregenomic RNA (pgRNA) are encapsidated together with the P protein, and reverse-transcribed inside the nucleocapsid. Initiation of reverse-transcription occurs first by binding the epsilon loop on the pgRNA genome, and is initiated by protein priming, thereby the 5'-end of (-)DNA is covalently linked to P protein. Partial (+)DNA is synthesized from the (-)DNA template and generates the relaxed circular DNA (RC-DNA) genome. After budding and infection, the RC-DNA migrates in the nucleus, and is converted into a plasmid-like covalently closed circular DNA (cccDNA). The activity of P protein does not seem to be necessary for cccDNA generation, and is presumably released from (+)DNA by host nuclear DNA repair machinery. This chain is Protein P, found in Homo sapiens (Human).